Reading from the N-terminus, the 427-residue chain is GTPase Obg (427 aa).

Positions 1–158 constitute an Obg domain; that stretch reads MFVDKVKVYV…RDVILELKVL (158 aa). Residues 118-144 form a disordered region; sequence KGGRGGRGNTRFATPANPAPELSENGE. The region spanning 159 to 329 is the OBG-type G domain; that stretch reads ADAGLVGFPS…LLRAIMDTIE (171 aa). GTP is bound by residues 165-172, 190-194, 212-215, 282-285, and 310-312; these read GFPSVGKS, FTTIT, DLPG, NKMD, and SAL. Ser172 and Thr192 together coordinate Mg(2+). In terms of domain architecture, OCT spans 349-427; it reads KHDKEQDPFV…LLEFEFEFIE (79 aa).

Belongs to the TRAFAC class OBG-HflX-like GTPase superfamily. OBG GTPase family. In terms of assembly, monomer. It depends on Mg(2+) as a cofactor.

It is found in the cytoplasm. In terms of biological role, an essential GTPase which binds GTP, GDP and possibly (p)ppGpp with moderate affinity, with high nucleotide exchange rates and a fairly low GTP hydrolysis rate. Plays a role in control of the cell cycle, stress response, ribosome biogenesis and in those bacteria that undergo differentiation, in morphogenesis control. The protein is GTPase Obg of Halalkalibacterium halodurans (strain ATCC BAA-125 / DSM 18197 / FERM 7344 / JCM 9153 / C-125) (Bacillus halodurans).